Reading from the N-terminus, the 171-residue chain is Putative lipoprotein LppO (171 aa).

The signal sequence occupies residues 1-28; it reads MTDPRHTVRIAVGATALGVSALGATLPA. Cysteine 29 carries N-palmitoyl cysteine lipidation. Residue cysteine 29 is the site of S-diacylglycerol cysteine attachment.

The protein resides in the cell membrane. The sequence is that of Putative lipoprotein LppO (lppO) from Mycobacterium tuberculosis (strain CDC 1551 / Oshkosh).